Consider the following 124-residue polypeptide: Putative outer membrane protein CT_569 (124 aa).

The first 31 residues, 1–31 (MKKTKKRKQSITLVEMMVVITLIGIIGGALA), serve as a signal peptide directing secretion.

Its subcellular location is the cell outer membrane. In Chlamydia trachomatis serovar D (strain ATCC VR-885 / DSM 19411 / UW-3/Cx), this protein is Putative outer membrane protein CT_569.